The chain runs to 557 residues: Dihydroxy-acid dehydratase (557 aa).

Cys-50 contributes to the [2Fe-2S] cluster binding site. Asp-82 provides a ligand contact to Mg(2+). Position 123 (Cys-123) interacts with [2Fe-2S] cluster. The Mg(2+) site is built by Asp-124 and Lys-125. Lys-125 carries the post-translational modification N6-carboxylysine. Cys-195 is a [2Fe-2S] cluster binding site. A Mg(2+)-binding site is contributed by Glu-447. The Proton acceptor role is filled by Ser-473.

This sequence belongs to the IlvD/Edd family. As to quaternary structure, homodimer. Requires [2Fe-2S] cluster as cofactor. Mg(2+) is required as a cofactor.

It carries out the reaction (2R)-2,3-dihydroxy-3-methylbutanoate = 3-methyl-2-oxobutanoate + H2O. It catalyses the reaction (2R,3R)-2,3-dihydroxy-3-methylpentanoate = (S)-3-methyl-2-oxopentanoate + H2O. Its pathway is amino-acid biosynthesis; L-isoleucine biosynthesis; L-isoleucine from 2-oxobutanoate: step 3/4. It participates in amino-acid biosynthesis; L-valine biosynthesis; L-valine from pyruvate: step 3/4. In terms of biological role, functions in the biosynthesis of branched-chain amino acids. Catalyzes the dehydration of (2R,3R)-2,3-dihydroxy-3-methylpentanoate (2,3-dihydroxy-3-methylvalerate) into 2-oxo-3-methylpentanoate (2-oxo-3-methylvalerate) and of (2R)-2,3-dihydroxy-3-methylbutanoate (2,3-dihydroxyisovalerate) into 2-oxo-3-methylbutanoate (2-oxoisovalerate), the penultimate precursor to L-isoleucine and L-valine, respectively. In Herminiimonas arsenicoxydans, this protein is Dihydroxy-acid dehydratase.